The chain runs to 474 residues: Cytochrome c biogenesis protein CcsB (474 aa).

3 consecutive transmembrane segments (helical) span residues 36–56 (LKLA…GTVI), 96–116 (SWWF…CTFR), and 182–202 (VGPI…MIGA).

It belongs to the Ccs1/CcsB family. As to quaternary structure, may interact with CcsA.

It is found in the cell inner membrane. Required during biogenesis of c-type cytochromes (cytochrome c6 and cytochrome f) at the step of heme attachment. This is Cytochrome c biogenesis protein CcsB from Gloeobacter violaceus (strain ATCC 29082 / PCC 7421).